Consider the following 353-residue polypeptide: 3-isopropylmalate dehydrogenase (353 aa).

An NAD(+)-binding site is contributed by 73–86 (GPQYDTLDRPLRPE). 4 residues coordinate substrate: arginine 93, arginine 103, arginine 131, and aspartate 220. 3 residues coordinate Mg(2+): aspartate 220, aspartate 244, and aspartate 248. Position 278-290 (278-290 (GSAPDIAGKNLAN)) interacts with NAD(+).

The protein belongs to the isocitrate and isopropylmalate dehydrogenases family. LeuB type 1 subfamily. In terms of assembly, homodimer. Mg(2+) is required as a cofactor. Mn(2+) serves as cofactor.

Its subcellular location is the cytoplasm. The enzyme catalyses (2R,3S)-3-isopropylmalate + NAD(+) = 4-methyl-2-oxopentanoate + CO2 + NADH. It functions in the pathway amino-acid biosynthesis; L-leucine biosynthesis; L-leucine from 3-methyl-2-oxobutanoate: step 3/4. Catalyzes the oxidation of 3-carboxy-2-hydroxy-4-methylpentanoate (3-isopropylmalate) to 3-carboxy-4-methyl-2-oxopentanoate. The product decarboxylates to 4-methyl-2 oxopentanoate. The protein is 3-isopropylmalate dehydrogenase of Thiobacillus denitrificans (strain ATCC 25259 / T1).